Reading from the N-terminus, the 150-residue chain is Cytochrome c-type biogenesis protein CcmE (150 aa).

The Cytoplasmic segment spans residues 1 to 7 (MTRKQKR). Residues 8-28 (LAIIGGGVGFLTAAVLLVMFA) traverse the membrane as a helical; Signal-anchor for type II membrane protein segment. Residues 29-150 (FSQAVAYFYV…VTLGGKENIQ (122 aa)) are Periplasmic-facing. Residues His-123 and Tyr-127 each coordinate heme.

This sequence belongs to the CcmE/CycJ family.

It is found in the cell inner membrane. In terms of biological role, heme chaperone required for the biogenesis of c-type cytochromes. Transiently binds heme delivered by CcmC and transfers the heme to apo-cytochromes in a process facilitated by CcmF and CcmH. The polypeptide is Cytochrome c-type biogenesis protein CcmE (Sinorhizobium fredii (strain NBRC 101917 / NGR234)).